Consider the following 381-residue polypeptide: CD209 antigen (381 aa).

At 1–37 the chain is on the cytoplasmic side; it reads MSDSKEPSVQQLGLLEEEQLRGLGFRQTRGYKSLAGC. Short sequence motifs (endocytosis signal) lie at residues 14 to 15, 16 to 18, and 31 to 34; these read LL, EEE, and YKSL. A helical; Signal-anchor for type II membrane protein transmembrane segment spans residues 38-58; it reads LGHGXLVLQLLSFTXLAGLLI. Residues 59 to 381 lie on the Extracellular side of the membrane; that stretch reads QVSKFPSSIS…APATPNPPPA (323 aa). An N-linked (GlcNAc...) asparagine glycan is attached at Asn-80. Repeat copies occupy residues 96–118, 119–141, 142–164, 165–187, 188–210, and 211–234. Positions 96 to 303 are 6 X approximate tandem repeats; the sequence is KLQEIYQELT…GLSDVNQEGT (208 aa). 3 cysteine pairs are disulfide-bonded: Cys-233–Cys-244, Cys-261–Cys-354, and Cys-333–Cys-346. Positions 240–355 constitute a C-type lectin domain; sequence FQGNCYFMSN…CNHAKFWICK (116 aa). Residues Glu-324, Asn-326, Ile-328, Glu-331, Asn-342, and Asp-343 each contribute to the Ca(2+) site.

As to quaternary structure, homotetramer. Interacts with C1QBP; the interaction is indicative for a C1q:C1QBP:CD209 signaling complex. Interacts with ICAM2 and ICAM3 by binding to mannose-like carbohydrates. Interacts (via C-type lectin domain) with CEACAM1 (via Lewis X moieties); this interaction is regulated by the glycosylation pattern of CEACAM1 on cell types and regulates contact between dendritic cells and neutrophils.

The protein localises to the membrane. In terms of biological role, pathogen-recognition receptor expressed on the surface of immature dendritic cells (DCs) and involved in initiation of primary immune response. Thought to mediate the endocytosis of pathogens which are subsequently degraded in lysosomal compartments. The receptor returns to the cell membrane surface and the pathogen-derived antigens are presented to resting T-cells via MHC class II proteins to initiate the adaptive immune response. Probably recognizes in a calcium-dependent manner high mannose N-linked oligosaccharides in a variety of pathogen antigens. Functionally, on DCs it is a high affinity receptor for ICAM2 and ICAM3 by binding to mannose-like carbohydrates. May act as a DC rolling receptor that mediates transendothelial migration of DC presursors from blood to tissues by binding endothelial ICAM2. Seems to regulate DC-induced T-cell proliferation by binding to ICAM3 on T-cells in the immunological synapse formed between DC and T-cells. This is CD209 antigen (CD209) from Symphalangus syndactylus (Siamang).